Here is a 706-residue protein sequence, read N- to C-terminus: Lysophospholipase 2 (706 aa).

The N-terminal stretch at 1-19 (MQLRNILQASSLISGLSLA) is a signal peptide. Positions 36-588 (PCPSDDTSLV…ADYCWNGTLS (553 aa)) constitute a PLA2c domain. N-linked (GlcNAc...) asparagine glycans are attached at residues Asn-47, Asn-80, Asn-94, Asn-125, Asn-162, Asn-181, Asn-193, Asn-217, Asn-279, Asn-309, Asn-365, Asn-390, Asn-491, Asn-515, Asn-524, Asn-543, Asn-567, Asn-584, Asn-598, Asn-630, Asn-634, Asn-642, Asn-648, Asn-652, and Asn-658. Residues 627-672 (TSGNTTSNSTTSTSSNVTSNSNSSSNTTLNSNSSSSSISSSTARSS) are disordered. A lipid anchor (GPI-anchor amidated asparagine) is attached at Asn-680. A propeptide spans 681-706 (AAAISYANTNTLMSLLGAITALFGLI) (removed in mature form).

The protein belongs to the lysophospholipase family. The GPI-anchor is attached to the protein in the endoplasmic reticulum and serves to target the protein to the cell surface. There, the glucosamine-inositol phospholipid moiety is cleaved off and the GPI-modified mannoprotein is covalently attached via its lipidless GPI glycan remnant to the 1,6-beta-glucan of the outer cell wall layer.

It localises to the secreted. The protein resides in the cell wall. It is found in the membrane. It carries out the reaction a 1-acyl-sn-glycero-3-phosphocholine + H2O = sn-glycerol 3-phosphocholine + a fatty acid + H(+). It catalyses the reaction 1-hexadecanoyl-sn-glycero-3-phosphoethanolamine + H2O = sn-glycero-3-phosphoethanolamine + hexadecanoate + H(+). The catalysed reaction is 1-hexadecanoyl-sn-glycero-3-phosphocholine + H2O = sn-glycerol 3-phosphocholine + hexadecanoate + H(+). The enzyme catalyses 1-hexadecanoyl-sn-glycero-3-phospho-L-serine + H2O = sn-glycero-3-phospho-L-serine + hexadecanoate + H(+). It carries out the reaction 1,2-dihexadecanoyl-sn-glycero-3-phosphocholine + H2O = 1-hexadecanoyl-sn-glycero-3-phosphocholine + hexadecanoate + H(+). Sequentially removes both fatty acyl groups from diacylglycerophospholipids and therefore has both phospholipase A and lysophospholipase activities. However, it does not display transacylase activity. Substrate preference is phosphatidylserine &gt; phosphatidylinositol &gt; phosphatidylcholine &gt; phosphatidylethanolamine. The substrate specificity is pH- and ion-dependent. In contrast with activities observed at optimum pH 3.5, the order of substrate preference at pH 5.5 is phosphatidylserine = phosphatidylethanolamine &gt; phosphatidylcholine &gt; phosphatidylinositol. In Saccharomyces cerevisiae (strain ATCC 204508 / S288c) (Baker's yeast), this protein is Lysophospholipase 2 (PLB2).